The primary structure comprises 316 residues: Probable thioesterase lcsE (316 aa).

It belongs to the AMT4 thioesterase family.

The protein operates within secondary metabolite biosynthesis. Its function is as follows. Probable thioesterase; part of the gene cluster that mediates the biosynthesis of the lipopeptide antibiotics leucinostatins that show extensive biological activities, including antimalarial, antiviral, antibacterial, antifungal, and antitumor activities, as well as phytotoxic. Leucinostatin A contains nine amino acid residues, including the unusual amino acid 4-methyl-L-proline (MePro), 2-amino-6-hydroxy-4-methyl-8-oxodecanoic acid (AHyMeOA), 3-hydroxyleucine (HyLeu), alpha-aminoisobutyric acid (AIB), beta-Ala, a 4-methylhex-2-enoic acid at the N-terminus as well as a N1,N1-dimethylpropane-1,2-diamine (DPD) at the C-terminus. The biosynthesis of leucinostatins is probably initiated with the assembly of 4-methylhex-2-enoic acid by a reducing PKS. Two reducing polyketide synthases, lcsB and lcsC, have been identified in the cluster and it is not clear which is the one that assembles 4-methylhex-2-enoic acid since both contain KS, AT, DH, cMT, ER, KR and ACP domains. The polyketide residue might be transferred to the NRPS lcsA, mediated by two additional enzymes, the acyl-CoA ligase lcsD and the thioesterase lcsE. The linear polyketide carboxylic acid, which is released from PKS, is converted to a CoA thioester by lcsD, and then lcsE hydrolyzes the thiol bond and shuttles the polyketide intermediate to lcsA. The C domain of the first module catalyzed the condensation of 4-methylhex-2-enoic acid and MePro carried by domain A1, followed by successive condensations of nine amino acids to trigger the elongation of the linear peptide. A5 and A6 domains of lcsA are proposed to incorporate leucine, A2 AHyMeOA, and A3 incorporates HyLeu. A4, A7 and A8 incorporate AIB. The AHyMeOA in leucinostatin A activated by the A2 might be produced by the second PKS (lcsB or lcsC) present within the cluster. The MePro is probably produced via leucine cyclization and may originate from a separate pathway, independent of the cluster. Another nonproteinogenic amino acid, beta-Ala, could be produced by an aspartic acid decarboxylase also localized outside of the cluster. Two candidates are VFPBJ_01400 and VFPBJ_10476. The final peptide scaffold may be released by the NAD(P)H-dependent thioester reductase (TE) at the C-terminal region of lcsA. Transamination of the lcsA product by the transaminase lcsP may produce DPD at the C-terminus. Further hydroxylation steps performed alternatively by the cytochrome P450 monooxygenases lcsI, lcsK and lcsN then yield the non-methylated leucinostatins precursor. It is also possible that leucines can be hydroxylated prior to their incorporation into the peptide. Varying extents of methylation then lead to the formation of leucinostatins A and B. This chain is Probable thioesterase lcsE, found in Purpureocillium lilacinum (Paecilomyces lilacinus).